Here is a 640-residue protein sequence, read N- to C-terminus: Telomere repeat-binding protein 4 (640 aa).

The region spanning 343–422 is the Ubiquitin-like domain; it reads VKFSIKSLRI…LGNLGFTLEP (80 aa). A disordered region spans residues 442–464; it reads TDSTKLSERSAASPALETGIPLP. An HTH myb-type domain is found at 530–589; the sequence is SQRRTRRPFSVTEVEALVSAVEEVGTGRWRDVKLRSFENASHRTYVDLKDKWKTLVHTAS. Positions 558–585 form a DNA-binding region, H-T-H motif; sequence WRDVKLRSFENASHRTYVDLKDKWKTLV.

In terms of assembly, homomultimer. Interacts with SNL1 (via PAH2). Interacts with STO. In terms of tissue distribution, expressed ubiquitously. Highest expression in flowers and roots.

The protein localises to the nucleus. Its function is as follows. Binds specifically to the plant telomeric double-stranded DNA sequences 5'-TTTAGGG-3'. At least 2 repeats of telomeric sequences are required for binding. Induces DNA bending. The polypeptide is Telomere repeat-binding protein 4 (TRP4) (Arabidopsis thaliana (Mouse-ear cress)).